The sequence spans 360 residues: Vitopine synthase (360 aa).

Belongs to the lysopine/nopaline/octopine/opine/vitopine dehydrogenases family.

In Allorhizobium ampelinum (strain ATCC BAA-846 / DSM 112012 / S4) (Agrobacterium vitis (strain S4)), this protein is Vitopine synthase (vis).